The following is a 311-amino-acid chain: Thioredoxin reductase (311 aa).

FAD is bound at residue 35 to 42; sequence ERGIPGGQ. Residues cysteine 134 and cysteine 137 are joined by a disulfide bond. 277 to 286 contacts FAD; the sequence is DVRDKGLRQI.

This sequence belongs to the class-II pyridine nucleotide-disulfide oxidoreductase family. Homodimer. The cofactor is FAD.

It localises to the cytoplasm. The enzyme catalyses [thioredoxin]-dithiol + NADP(+) = [thioredoxin]-disulfide + NADPH + H(+). This is Thioredoxin reductase (trxB) from Staphylococcus aureus (strain MRSA252).